The following is a 230-amino-acid chain: Large ribosomal subunit protein uL1 (230 aa).

This sequence belongs to the universal ribosomal protein uL1 family. Part of the 50S ribosomal subunit.

Binds directly to 23S rRNA. The L1 stalk is quite mobile in the ribosome, and is involved in E site tRNA release. In terms of biological role, protein L1 is also a translational repressor protein, it controls the translation of the L11 operon by binding to its mRNA. In Oenococcus oeni (strain ATCC BAA-331 / PSU-1), this protein is Large ribosomal subunit protein uL1.